The following is a 479-amino-acid chain: Zinc metalloproteinase/disintegrin (479 aa).

The N-terminal stretch at 1-20 is a signal peptide; sequence MIQVLLVTICLAAFPYQGSS. Residues 21 to 187 constitute a propeptide that is removed on maturation; it reads IILESGKVND…PIKKASQLIV (167 aa). In terms of domain architecture, Peptidase M12B spans 193 to 390; the sequence is RYMEIVIVVD…ENPPCILNKP (198 aa). The Ca(2+) site is built by E196 and D280. Cystine bridges form between C304-C385, C344-C369, and C346-C352. Residue H329 participates in Zn(2+) binding. Residue E330 is part of the active site. Residues H333 and H339 each coordinate Zn(2+). Positions 385 and 388 each coordinate Ca(2+). The propeptide occupies 390 to 414; the sequence is PLRTDTVSTPVSGNELLEAGKDYDR. The Disintegrin domain occupies 398–479; sequence TPVSGNELLE…ADCPRNPYHA (82 aa). Intrachain disulfides connect C435-C441, C440-C465, and C453-C472. A Cell attachment site motif is present at residues 457 to 459; that stretch reads RGD.

It belongs to the venom metalloproteinase (M12B) family. P-II subfamily. P-IIa sub-subfamily. Monomer. Zn(2+) is required as a cofactor. In terms of tissue distribution, expressed by the venom gland.

It is found in the secreted. Functionally, snake venom metalloproteinase that impairs hemostasis in the envenomed animal. Its function is as follows. Inhibits platelet aggregation induced by ADP, thrombin, platelet-activating factor and collagen. Acts by inhibiting fibrinogen interaction with platelet receptors GPIIb/GPIIIa (ITGA2B/ITGB3). This is Zinc metalloproteinase/disintegrin from Deinagkistrodon acutus (Hundred-pace snake).